We begin with the raw amino-acid sequence, 214 residues long: Ribosomal RNA small subunit methyltransferase G (214 aa).

Residues Gly-81, Met-86, 132-133 (VE), and Arg-147 each bind S-adenosyl-L-methionine.

This sequence belongs to the methyltransferase superfamily. RNA methyltransferase RsmG family.

The protein resides in the cytoplasm. It carries out the reaction guanosine(527) in 16S rRNA + S-adenosyl-L-methionine = N(7)-methylguanosine(527) in 16S rRNA + S-adenosyl-L-homocysteine. Functionally, specifically methylates the N7 position of guanine in position 527 of 16S rRNA. The polypeptide is Ribosomal RNA small subunit methyltransferase G (Pseudomonas paraeruginosa (strain DSM 24068 / PA7) (Pseudomonas aeruginosa (strain PA7))).